The following is a 262-amino-acid chain: Thiazole synthase (262 aa).

The active-site Schiff-base intermediate with DXP is the K104. 1-deoxy-D-xylulose 5-phosphate-binding positions include G165, A191–G192, and N213–T214.

Belongs to the ThiG family. Homotetramer. Forms heterodimers with either ThiH or ThiS.

It localises to the cytoplasm. It carries out the reaction [ThiS sulfur-carrier protein]-C-terminal-Gly-aminoethanethioate + 2-iminoacetate + 1-deoxy-D-xylulose 5-phosphate = [ThiS sulfur-carrier protein]-C-terminal Gly-Gly + 2-[(2R,5Z)-2-carboxy-4-methylthiazol-5(2H)-ylidene]ethyl phosphate + 2 H2O + H(+). It functions in the pathway cofactor biosynthesis; thiamine diphosphate biosynthesis. Its function is as follows. Catalyzes the rearrangement of 1-deoxy-D-xylulose 5-phosphate (DXP) to produce the thiazole phosphate moiety of thiamine. Sulfur is provided by the thiocarboxylate moiety of the carrier protein ThiS. In vitro, sulfur can be provided by H(2)S. The sequence is that of Thiazole synthase from Nitrosococcus oceani (strain ATCC 19707 / BCRC 17464 / JCM 30415 / NCIMB 11848 / C-107).